Reading from the N-terminus, the 166-residue chain is Peptidyl-prolyl cis-trans isomerase-like 1 (166 aa).

The 155-residue stretch at 10–164 (QPPNVYLETS…DDVKILKAYP (155 aa)) folds into the PPIase cyclophilin-type domain. Cyclosporin A is bound by residues 54–65 (HRIIKDFMIQGG), 70–71 (TG), 99–104 (AMANAG), 109–113 (GSQFF), threonine 119, and lysine 125. The residue at position 149 (serine 149) is a Phosphoserine.

It belongs to the cyclophilin-type PPIase family. PPIL1 subfamily. In terms of assembly, identified in the spliceosome C complex. Interacts with SNW1/SKIP. Interacts with CDC40/PRP17; this interaction leads to CDC40 isomerization. Interacts with RBM22.

The protein resides in the nucleus. The catalysed reaction is [protein]-peptidylproline (omega=180) = [protein]-peptidylproline (omega=0). With respect to regulation, inhibited by Cyclosporin A. In terms of biological role, involved in pre-mRNA splicing as component of the spliceosome. PPIases accelerate the folding of proteins. It catalyzes the cis-trans isomerization of proline imidic peptide bonds in oligopeptides. Catalyzes prolyl peptide bond isomerization in CDC40/PRP17. Plays an important role in embryonic brain development; this function is independent of its isomerase activity. This chain is Peptidyl-prolyl cis-trans isomerase-like 1 (Ppil1), found in Mus musculus (Mouse).